The sequence spans 364 residues: Succinyl-diaminopimelate desuccinylase (364 aa).

Residue His66 participates in Zn(2+) binding. The active site involves Asp68. Residue Asp97 participates in Zn(2+) binding. Residue Glu127 is the Proton acceptor of the active site. Zn(2+) contacts are provided by Glu128, Glu156, and His341.

It belongs to the peptidase M20A family. DapE subfamily. Homodimer. Zn(2+) serves as cofactor. The cofactor is Co(2+).

It catalyses the reaction N-succinyl-(2S,6S)-2,6-diaminopimelate + H2O = (2S,6S)-2,6-diaminopimelate + succinate. It functions in the pathway amino-acid biosynthesis; L-lysine biosynthesis via DAP pathway; LL-2,6-diaminopimelate from (S)-tetrahydrodipicolinate (succinylase route): step 3/3. Catalyzes the hydrolysis of N-succinyl-L,L-diaminopimelic acid (SDAP), forming succinate and LL-2,6-diaminopimelate (DAP), an intermediate involved in the bacterial biosynthesis of lysine and meso-diaminopimelic acid, an essential component of bacterial cell walls. This chain is Succinyl-diaminopimelate desuccinylase, found in Wolinella succinogenes (strain ATCC 29543 / DSM 1740 / CCUG 13145 / JCM 31913 / LMG 7466 / NCTC 11488 / FDC 602W) (Vibrio succinogenes).